Consider the following 110-residue polypeptide: Urease subunit beta (110 aa).

Belongs to the urease beta subunit family. As to quaternary structure, heterotrimer of UreA (gamma), UreB (beta) and UreC (alpha) subunits. Three heterotrimers associate to form the active enzyme.

It localises to the cytoplasm. The catalysed reaction is urea + 2 H2O + H(+) = hydrogencarbonate + 2 NH4(+). It participates in nitrogen metabolism; urea degradation; CO(2) and NH(3) from urea (urease route): step 1/1. This chain is Urease subunit beta, found in Pseudoalteromonas translucida (strain TAC 125).